A 440-amino-acid chain; its full sequence is Xaa-Pro dipeptidase (440 aa).

Mn(2+) is bound by residues aspartate 244, aspartate 255, histidine 335, glutamate 380, and glutamate 419.

The protein belongs to the peptidase M24B family. Bacterial-type prolidase subfamily. It depends on Mn(2+) as a cofactor.

It carries out the reaction Xaa-L-Pro dipeptide + H2O = an L-alpha-amino acid + L-proline. Its function is as follows. Splits dipeptides with a prolyl residue in the C-terminal position. The sequence is that of Xaa-Pro dipeptidase from Shewanella baltica (strain OS185).